The primary structure comprises 38 residues: Large ribosomal subunit protein bL36A (38 aa).

It belongs to the bacterial ribosomal protein bL36 family.

The sequence is that of Large ribosomal subunit protein bL36A from Pectobacterium atrosepticum (strain SCRI 1043 / ATCC BAA-672) (Erwinia carotovora subsp. atroseptica).